The following is a 367-amino-acid chain: Phosphoribosylaminoimidazole-succinocarboxamide synthase (367 aa).

This sequence belongs to the SAICAR synthetase family.

The catalysed reaction is 5-amino-1-(5-phospho-D-ribosyl)imidazole-4-carboxylate + L-aspartate + ATP = (2S)-2-[5-amino-1-(5-phospho-beta-D-ribosyl)imidazole-4-carboxamido]succinate + ADP + phosphate + 2 H(+). Its pathway is purine metabolism; IMP biosynthesis via de novo pathway; 5-amino-1-(5-phospho-D-ribosyl)imidazole-4-carboxamide from 5-amino-1-(5-phospho-D-ribosyl)imidazole-4-carboxylate: step 1/2. The sequence is that of Phosphoribosylaminoimidazole-succinocarboxamide synthase from Aliivibrio salmonicida (strain LFI1238) (Vibrio salmonicida (strain LFI1238)).